We begin with the raw amino-acid sequence, 287 residues long: MEGIIIKGIGGFYYIKTDEGIIECKARGKFRYNSLKPMVGDRVTIKVENGKGVIEDIHERSSELIRPTVANVTQAFVVFAIKNPDINLDLLNRFLTLCEYNDIHAVVCLNKEDLCTEEEKENLKELINDIGYEVLFINAKEGKGFDALKERLEHNITVLCGPSGAGKSTLLNAFIDREHMETGSVSEKIGRGKHTTRHSELIDVDNGYLVDTPGFTTLDVTFIDRDSLKYCFPEFNDYNNLCKFNGCNHYKEPKCAVKEAVEEGKINKLRYEFYIKTLEEIINRRGN.

In terms of domain architecture, CP-type G spans 61–218 (SSELIRPTVA…LVDTPGFTTL (158 aa)). GTP-binding positions include 110-113 (NKED) and 161-169 (GPSGAGKST). Residues cysteine 242, cysteine 247, histidine 249, and cysteine 255 each coordinate Zn(2+).

It belongs to the TRAFAC class YlqF/YawG GTPase family. RsgA subfamily. In terms of assembly, monomer. Associates with 30S ribosomal subunit, binds 16S rRNA. Requires Zn(2+) as cofactor.

Its subcellular location is the cytoplasm. Its function is as follows. One of several proteins that assist in the late maturation steps of the functional core of the 30S ribosomal subunit. Helps release RbfA from mature subunits. May play a role in the assembly of ribosomal proteins into the subunit. Circularly permuted GTPase that catalyzes slow GTP hydrolysis, GTPase activity is stimulated by the 30S ribosomal subunit. In Clostridium perfringens (strain SM101 / Type A), this protein is Small ribosomal subunit biogenesis GTPase RsgA.